The sequence spans 650 residues: MGKIIGIDLGTTNSCVAIMEGNQVKVIENSEGTRTTPSIIAYMDDNEVLVGAPAKRQSVTNPKNTLFAVKRLIGRRFEEKEVQKDIGLMPYSIIKADNGDAWVEAHGEKLAPPQVSAEVLRKMKKTAEDYLGEPVTEAVITVPAYFNDSQRQATKDAGRIAGLEVKRIINEPTAAALAFGLDKVEKGDRKIAVYDLGGGTFDVSIIEIADVDGEMQFEVLSTNGDTFLGGEDFDQRIIDYIIGEFKKEQGVDLSKDVLALQRLKEAAEKAKIELSSGQQTEINLPYITADASGPKHLNLKITRAKLEALVEDLVERTIEPCRIAIKDAGVKVSDIDDVILVGGQTRMPKVMEKVKEFFGKDPRRDVNPDEAVAVGAAIQGQVLSGDRKDVLLLDVTPLSLGIETLGGVMTKMINKNTTIPTKHAQVYSTADDNQGAVTIKVFQGEREMAAGNKLLGEFNLEGIPPAPRGVPQIEVTFDIDANGILHVGAKDKATGKENKITIKANSGLSEAEIDQMIKDAEANAAEDHKLRELADSRNQGDALVHSTKKALTEYGDKLDAGEKEAIEASLKSLEEVLKDTSADKAAIDAKVEELGKVSQKLGEKMYADMQAQQAGAAGAAGAAEGAAHAGGAQQAADDVVDAEFKEVKKD.

Threonine 200 is subject to Phosphothreonine; by autocatalysis.

This sequence belongs to the heat shock protein 70 family.

Acts as a chaperone. In Burkholderia orbicola (strain MC0-3), this protein is Chaperone protein DnaK.